A 478-amino-acid chain; its full sequence is MARKTLRARRFFSLIFPFFFMTSVYAEQTSVSAKTVTVEAKNETFSPQHPDQYQSWKATSEQSAREDALAEDPRLVILWAGYPFSRDYNKPRGHAYAVTDVRETLRTGAPKTAEEGPLPMACWSCKSPDVARLIQQEGEDGYFHGKWARGGPEIVNDLGCADCHNTASDDFAQGKPALTLSRPYAERAMEAIGKPFDKAGRFDQQSMVCGQCHVEYYFEGKNKAVKFPWDEGMKVENMEKYYDAIAFSDWTNSLSKTPMLKAQHPEYETWSAGIHGKNNVTCIDCHMPKVQNAEGKLYTDHKIGNPFDNFAQTCANCHTQDKASLQKVVAERKQAIHDLKIKVEDQLVHAHFEAKAAWDAGATDAEMKPILNDIRHAQWRWDLAIASHGIHMHAPEEGLRMLGSAMDKAADARTKLARLLATKGITHEIPLPDISTKEKAQKAIGLNMQQINAEKQDFLKTVVPQWEDQARKNGLLSQ.

The signal sequence occupies residues 1 to 26 (MARKTLRARRFFSLIFPFFFMTSVYA). His94 is a binding site for heme c. Residues Cys122, Cys125, and Lys126 each contribute to the heme site. Heme c-binding residues include Cys160, Cys163, His164, Cys209, Cys212, and His213. Residues Glu215, Tyr216, Lys261, and Gln263 each contribute to the Ca(2+) site. Residue Tyr216 participates in substrate binding. His264 provides a ligand contact to substrate. Positions 275, 282, 285, 286, 301, 314, 317, 318, and 393 each coordinate heme c.

The protein belongs to the cytochrome c-552 family. The cofactor is Ca(2+). Requires heme c as cofactor.

It is found in the periplasm. It carries out the reaction 6 Fe(III)-[cytochrome c] + NH4(+) + 2 H2O = 6 Fe(II)-[cytochrome c] + nitrite + 8 H(+). Its pathway is nitrogen metabolism; nitrate reduction (assimilation). Functionally, catalyzes the reduction of nitrite to ammonia, consuming six electrons in the process. This is Cytochrome c-552 from Salmonella arizonae (strain ATCC BAA-731 / CDC346-86 / RSK2980).